Consider the following 237-residue polypeptide: Ribonuclease 3 (237 aa).

The RNase III domain maps to 8–134 (RSALLEKLGV…VIGAVYLDAG (127 aa)). Position 47 (Glu47) interacts with Mg(2+). Asp51 is a catalytic residue. Residues Asp120 and Glu123 each coordinate Mg(2+). The active site involves Glu123. Residues 161–229 (DPKTSLQEAA…ALSAWTALTN (69 aa)) enclose the DRBM domain.

This sequence belongs to the ribonuclease III family. Homodimer. Mg(2+) is required as a cofactor.

It is found in the cytoplasm. It catalyses the reaction Endonucleolytic cleavage to 5'-phosphomonoester.. In terms of biological role, digests double-stranded RNA. Involved in the processing of primary rRNA transcript to yield the immediate precursors to the large and small rRNAs (23S and 16S). Processes some mRNAs, and tRNAs when they are encoded in the rRNA operon. Processes pre-crRNA and tracrRNA of type II CRISPR loci if present in the organism. The chain is Ribonuclease 3 from Leifsonia xyli subsp. xyli (strain CTCB07).